The primary structure comprises 620 residues: Two-component response regulator ORR27 (620 aa).

Positions 24 to 138 (HVLVVDDDAA…AIKFIWKHVL (115 aa)) constitute a Response regulatory domain. Asp-76 carries the 4-aspartylphosphate modification. 2 disordered regions span residues 171-197 (PPAV…AELS) and 215-257 (VWSS…LEAT). A DNA-binding region (myb-like GARP) is located at residues 261 to 321 (KKVRTRFTWT…HLQKYRSWLE (61 aa)). Positions 431–456 (SVSRDAHENGNSQARGSAMSNGTSGT) are enriched in polar residues. Disordered regions lie at residues 431–457 (SVSR…SGTR), 501–523 (SDQN…NSKT), and 596–620 (PPRG…SSGP). A compositionally biased stretch (polar residues) spans 603 to 620 (EIASHENTNGKNGASSGP).

Belongs to the ARR family. Type-B subfamily. Two-component system major event consists of a His-to-Asp phosphorelay between a sensor histidine kinase (HK) and a response regulator (RR). In plants, the His-to-Asp phosphorelay involves an additional intermediate named Histidine-containing phosphotransfer protein (HPt). This multistep phosphorelay consists of a His-Asp-His-Asp sequential transfer of a phosphate group between first a His and an Asp of the HK protein, followed by the transfer to a conserved His of the HPt protein and finally the transfer to an Asp in the receiver domain of the RR protein.

It localises to the nucleus. In terms of biological role, transcriptional activator that binds specific DNA sequence. Functions as a response regulator involved in His-to-Asp phosphorelay signal transduction system. Phosphorylation of the Asp residue in the receiver domain activates the ability of the protein to promote the transcription of target genes. May directly activate some type-A response regulators in response to cytokinins. The polypeptide is Two-component response regulator ORR27 (Oryza sativa subsp. japonica (Rice)).